Consider the following 138-residue polypeptide: MSRIVAIDYGRKRTGIAVSDTLQLIANGLTTVPTHELLNFIGGYVAKEPVERIIIGLPKQMNNEASENMKNIEPFVRSLKKRFPELPVEYVDERFTSVLAHRTMLEAGLKKKDRQNKALVDEISATIILQTYLESKRF.

It belongs to the YqgF nuclease family.

It is found in the cytoplasm. Functionally, could be a nuclease involved in processing of the 5'-end of pre-16S rRNA. The polypeptide is Putative pre-16S rRNA nuclease (Bacteroides thetaiotaomicron (strain ATCC 29148 / DSM 2079 / JCM 5827 / CCUG 10774 / NCTC 10582 / VPI-5482 / E50)).